The following is a 226-amino-acid chain: ATP synthase F(0) complex subunit a (226 aa).

Met-1 is subject to N-formylmethionine. 6 helical membrane passes run 9 to 29 (FITP…FPSL), 68 to 88 (WTLM…LGLL), 97 to 117 (QLSM…ITGF), 138 to 158 (IPML…ALAV), 164 to 184 (ITAG…LMSI), and 189 to 209 (ALIT…VAMI).

It belongs to the ATPase A chain family. Component of the ATP synthase complex composed at least of ATP5F1A/subunit alpha, ATP5F1B/subunit beta, ATP5MC1/subunit c (homooctomer), MT-ATP6/subunit a, MT-ATP8/subunit 8, ATP5ME/subunit e, ATP5MF/subunit f, ATP5MG/subunit g, ATP5MK/subunit k, ATP5MJ/subunit j, ATP5F1C/subunit gamma, ATP5F1D/subunit delta, ATP5F1E/subunit epsilon, ATP5PF/subunit F6, ATP5PB/subunit b, ATP5PD/subunit d, ATP5PO/subunit OSCP. ATP synthase complex consists of a soluble F(1) head domain (subunits alpha(3) and beta(3)) - the catalytic core - and a membrane F(0) domain - the membrane proton channel (subunits c, a, 8, e, f, g, k and j). These two domains are linked by a central stalk (subunits gamma, delta, and epsilon) rotating inside the F1 region and a stationary peripheral stalk (subunits F6, b, d, and OSCP). Interacts with DNAJC30; interaction is direct.

The protein resides in the mitochondrion inner membrane. The catalysed reaction is H(+)(in) = H(+)(out). Its function is as follows. Subunit a, of the mitochondrial membrane ATP synthase complex (F(1)F(0) ATP synthase or Complex V) that produces ATP from ADP in the presence of a proton gradient across the membrane which is generated by electron transport complexes of the respiratory chain. ATP synthase complex consist of a soluble F(1) head domain - the catalytic core - and a membrane F(1) domain - the membrane proton channel. These two domains are linked by a central stalk rotating inside the F(1) region and a stationary peripheral stalk. During catalysis, ATP synthesis in the catalytic domain of F(1) is coupled via a rotary mechanism of the central stalk subunits to proton translocation. With the subunit c (ATP5MC1), forms the proton-conducting channel in the F(0) domain, that contains two crucial half-channels (inlet and outlet) that facilitate proton movement from the mitochondrial intermembrane space (IMS) into the matrix. Protons are taken up via the inlet half-channel and released through the outlet half-channel, following a Grotthuss mechanism. The polypeptide is ATP synthase F(0) complex subunit a (Bos taurus (Bovine)).